The sequence spans 1061 residues: TonB-dependent transporter Oar (1061 aa).

A signal peptide spans 1–26 (MHLNRVLRETGVVVAAGLLYGSAAFA). Residues 121-243 (EIVGAPPTID…TGGVINAVTR (123 aa)) form the TBDR plug domain. The 814-residue stretch at 248–1061 (EFHGSVFANW…QVRFGIRYTF (814 aa)) folds into the TBDR beta-barrel domain. Positions 701–722 (RSLAEPGQGTATSCDPSSFESQ) are disordered. The span at 709-722 (GTATSCDPSSFESQ) shows a compositional bias: polar residues.

It belongs to the TonB-dependent receptor family. In terms of assembly, interacts with TonB. Part of a transport system composed of the outer membrane transporter Oar, the trans-periplasmic binding protein TonB and the inner membrane proteins ExbB and ExbD.

It is found in the cell outer membrane. Required for secretion of the protease PopC across the bacterial outer membrane. Binds and probably transports PopC from the periplasm to the extracellular milieu. It derives its energy for transport by interacting with the trans-periplasmic membrane protein TonB. Required for cellular adhesion during fruiting body formation, a multicellular developmental program that is induced in response to starvation. This is TonB-dependent transporter Oar from Myxococcus xanthus.